The chain runs to 373 residues: 3-isopropylmalate dehydrogenase (373 aa).

Residue 82–93 participates in NAD(+) binding; sequence GPKWGTGAVRPE. 4 residues coordinate substrate: arginine 100, arginine 110, arginine 139, and aspartate 231. Residues aspartate 231 and aspartate 260 each contribute to the Mg(2+) site. 295-306 contributes to the NAD(+) binding site; sequence GSAPDLPENKVN.

It belongs to the isocitrate and isopropylmalate dehydrogenases family. Homodimer. Mg(2+) serves as cofactor. The cofactor is Mn(2+).

It localises to the cytoplasm. The catalysed reaction is (2R,3S)-3-isopropylmalate + NAD(+) = 4-methyl-2-oxopentanoate + CO2 + NADH. It participates in amino-acid biosynthesis; L-leucine biosynthesis; L-leucine from 3-methyl-2-oxobutanoate: step 3/4. Catalyzes the oxidation of 3-carboxy-2-hydroxy-4-methylpentanoate (3-isopropylmalate) to 3-carboxy-4-methyl-2-oxopentanoate. The product decarboxylates to 4-methyl-2 oxopentanoate. The chain is 3-isopropylmalate dehydrogenase (LEU2) from Scheffersomyces stipitis (strain ATCC 58785 / CBS 6054 / NBRC 10063 / NRRL Y-11545) (Yeast).